A 229-amino-acid chain; its full sequence is Large ribosomal subunit protein uL1 (229 aa).

The protein belongs to the universal ribosomal protein uL1 family. Part of the 50S ribosomal subunit.

Its function is as follows. Binds directly to 23S rRNA. The L1 stalk is quite mobile in the ribosome, and is involved in E site tRNA release. In terms of biological role, protein L1 is also a translational repressor protein, it controls the translation of the L11 operon by binding to its mRNA. This is Large ribosomal subunit protein uL1 from Ureaplasma urealyticum serovar 10 (strain ATCC 33699 / Western).